Consider the following 163-residue polypeptide: Endoribonuclease YbeY (163 aa).

The Zn(2+) site is built by H121, H125, and H131.

This sequence belongs to the endoribonuclease YbeY family. Requires Zn(2+) as cofactor.

It localises to the cytoplasm. Its function is as follows. Single strand-specific metallo-endoribonuclease involved in late-stage 70S ribosome quality control and in maturation of the 3' terminus of the 16S rRNA. The polypeptide is Endoribonuclease YbeY (Synechococcus sp. (strain JA-2-3B'a(2-13)) (Cyanobacteria bacterium Yellowstone B-Prime)).